The chain runs to 165 residues: Acireductone dioxygenase (165 aa).

4 residues coordinate Fe(2+): H90, H92, E96, and H134. Residues H90, H92, E96, and H134 each coordinate Ni(2+).

It belongs to the acireductone dioxygenase (ARD) family. Monomer. The cofactor is Fe(2+). Ni(2+) serves as cofactor.

The enzyme catalyses 1,2-dihydroxy-5-(methylsulfanyl)pent-1-en-3-one + O2 = 3-(methylsulfanyl)propanoate + CO + formate + 2 H(+). The catalysed reaction is 1,2-dihydroxy-5-(methylsulfanyl)pent-1-en-3-one + O2 = 4-methylsulfanyl-2-oxobutanoate + formate + 2 H(+). It participates in amino-acid biosynthesis; L-methionine biosynthesis via salvage pathway; L-methionine from S-methyl-5-thio-alpha-D-ribose 1-phosphate: step 5/6. Its function is as follows. Catalyzes 2 different reactions between oxygen and the acireductone 1,2-dihydroxy-3-keto-5-methylthiopentene (DHK-MTPene) depending upon the metal bound in the active site. Fe-containing acireductone dioxygenase (Fe-ARD) produces formate and 2-keto-4-methylthiobutyrate (KMTB), the alpha-ketoacid precursor of methionine in the methionine recycle pathway. Ni-containing acireductone dioxygenase (Ni-ARD) produces methylthiopropionate, carbon monoxide and formate, and does not lie on the methionine recycle pathway. The polypeptide is Acireductone dioxygenase (Rhodopseudomonas palustris (strain ATCC BAA-98 / CGA009)).